Consider the following 1776-residue polypeptide: 6-methylsalicylic acid synthase (1776 aa).

Low complexity predominate over residues 1–18 (MHSVSPSTYPSGGTSPAP). A disordered region spans residues 1–26 (MHSVSPSTYPSGGTSPAPADTPGTEY). The Ketosynthase family 3 (KS3) domain maps to 32 to 457 (SNDVAVVGMA…GTVSHAVIEE (426 aa)). Catalysis depends on for beta-ketoacyl synthase activity residues Cys204, His339, and His379. A malonyl-CoA:ACP transacylase (MAT) domain region spans residues 567-880 (VWVFSGHGAQ…IAQLHCRGAE (314 aa)). Residues 925–1044 (HTLLGQRIPV…AYWDRKVLGS (120 aa)) are N-terminal hotdog fold. A dehydratase (DH) domain region spans residues 925–1196 (HTLLGQRIPV…FTAMRFSEIE (272 aa)). Positions 925–1201 (HTLLGQRIPV…FSEIEGTPGV (277 aa)) constitute a PKS/mFAS DH domain. The Proton acceptor; for dehydratase activity role is filled by His957. The tract at residues 1058–1201 (TTKLADNFSI…FSEIEGTPGV (144 aa)) is C-terminal hotdog fold. The active-site Proton donor; for dehydratase activity is Asp1113. The product template (PT) domain stretch occupies residues 1205–1657 (MESLVHQIAW…LRSLAIDDGE (453 aa)). A Carrier domain is found at 1700–1774 (AYLDEKIRGC…HLVVWFAEKI (75 aa)). An O-(pantetheine 4'-phosphoryl)serine modification is found at Ser1734.

It localises to the cytoplasm. Its subcellular location is the cytosol. It catalyses the reaction 3 malonyl-CoA + acetyl-CoA + NADPH + 3 H(+) = 6-methylsalicylate + 3 CO2 + NADP(+) + 4 CoA + H2O. The protein operates within mycotoxin biosynthesis; patulin biosynthesis. 6-methylsalicylic acid synthase; part of the gene cluster that mediates the biosynthesis of patulin, an acetate-derived tetraketide mycotoxin produced by several fungal species that shows antimicrobial properties against several bacteria. PatK catalyzes the first step of the pathway which is the synthesis of 6-methylsalicylic acid via condensation of 1 acetate and 3 malonate units. The pathway begins with the synthesis of 6-methylsalicylic acid by the polyketide synthase (PKS) patK via condensation of acetate and malonate units. The 6-methylsalicylic acid decarboxylase patG then catalyzes the decarboxylation of 6-methylsalicylic acid to yield m-cresol (also known as 3-methylphenol). These first reactions occur in the cytosol. The intermediate m-cresol is then transported into the endoplasmic reticulum where the cytochrome P450 monooxygenase patH converts it to m-hydroxybenzyl alcohol, which is further converted to gentisyl alcohol by the cytochrome P450 monooxygenase patI. The oxidoreductases patJ and patO further convert gentisyl alcohol to isoepoxydon in the vacuole. PatN catalyzes then the transformation of isoepoxydon into phyllostine. The cluster protein patF is responsible for the conversion from phyllostine to neopatulin whereas the alcohol dehydrogenase patD converts neopatulin to E-ascladiol. The steps between isoepoxydon and E-ascladiol occur in the cytosol, and E-ascladiol is probably secreted to the extracellular space by one of the cluster-specific transporters patC or patM. Finally, the secreted patulin synthase patE catalyzes the conversion of E-ascladiol to patulin. This Penicillium expansum (Blue mold rot fungus) protein is 6-methylsalicylic acid synthase.